A 345-amino-acid chain; its full sequence is Fe-S cluster assembly protein DRE2 (345 aa).

The tract at residues 11-166 (FSHSSNGVVL…SIGSSSGSSS (156 aa)) is N-terminal SAM-like domain. Residues 147-166 (SKPATASSSFSIGSSSGSSS) are disordered. Residues 153–166 (SSSFSIGSSSGSSS) show a composition bias toward low complexity. The tract at residues 167-210 (ALPLRRKLGSGASANAKKSLWATQPASANDLIDEASLLRDADFV) is linker. [2Fe-2S] cluster-binding residues include C220, C233, C236, and C238. Positions 220–238 (CDVGAGQGKKKKACKGCTC) are fe-S binding site A. 4 residues coordinate [4Fe-4S] cluster: C307, C310, C318, and C321. 2 consecutive short sequence motifs (cx2C motif) follow at residues 307–310 (CGSC) and 318–321 (CSSC). Positions 307–321 (CGSCFLGDAFRCSSC) are fe-S binding site B.

It belongs to the anamorsin family. In terms of assembly, monomer. Interacts with TAH18. Interacts with MIA40. [2Fe-2S] cluster serves as cofactor. [4Fe-4S] cluster is required as a cofactor.

Its subcellular location is the cytoplasm. The protein resides in the mitochondrion intermembrane space. Functionally, component of the cytosolic iron-sulfur (Fe-S) protein assembly (CIA) machinery required for the maturation of extramitochondrial Fe-S proteins. Part of an electron transfer chain functioning in an early step of cytosolic Fe-S biogenesis, facilitating the de novo assembly of a [4Fe-4S] cluster on the scaffold complex CFD1-NBP35. Electrons are transferred to DRE2 from NADPH via the FAD- and FMN-containing protein TAH18. TAH18-DRE2 are also required for the assembly of the diferric tyrosyl radical cofactor of ribonucleotide reductase (RNR), probably by providing electrons for reduction during radical cofactor maturation in the catalytic small subunit RNR2. The sequence is that of Fe-S cluster assembly protein DRE2 from Mycosarcoma maydis (Corn smut fungus).